The chain runs to 350 residues: Secreted effector protein PipB2 (350 aa).

Pentapeptide repeat domains lie at 162-201 (ANLT…NLSG), 202-241 (TSLG…SLLG), 247-286 (CNCS…IMEG), and 287-326 (AVLT…TLTD).

Interacts with the host kinesin light chain (KLC), a subunit of the kinesin-1 motor complex.

The protein localises to the secreted. It is found in the host membrane. Functionally, effector proteins function to alter host cell physiology and promote bacterial survival in host tissues. Involved in the reorganization of late endosome/lysosome (LE/Lys) compartments in mammalian cells. Necessary and sufficient to link kinesin-1 onto the Salmonella-containing vacuole (SCV) membrane. Required for centrifugal extension of lysosomal glycoprotein-rich membrane tubules, known as Salmonella-induced filaments (Sifs), away from the SCV and toward the cell periphery. Required for virulence, but not for intracellular survival and replication in phagocytic cells. The protein is Secreted effector protein PipB2 (pipB2) of Salmonella typhimurium (strain LT2 / SGSC1412 / ATCC 700720).